The chain runs to 122 residues: Large ribosomal subunit protein uL14 (122 aa).

This sequence belongs to the universal ribosomal protein uL14 family. Part of the 50S ribosomal subunit. Forms a cluster with proteins L3 and L19. In the 70S ribosome, L14 and L19 interact and together make contacts with the 16S rRNA in bridges B5 and B8.

Its function is as follows. Binds to 23S rRNA. Forms part of two intersubunit bridges in the 70S ribosome. The protein is Large ribosomal subunit protein uL14 of Paenarthrobacter aurescens (strain TC1).